Reading from the N-terminus, the 572-residue chain is Proline--tRNA ligase (572 aa).

The protein belongs to the class-II aminoacyl-tRNA synthetase family. ProS type 1 subfamily. As to quaternary structure, homodimer.

The protein localises to the cytoplasm. It catalyses the reaction tRNA(Pro) + L-proline + ATP = L-prolyl-tRNA(Pro) + AMP + diphosphate. Catalyzes the attachment of proline to tRNA(Pro) in a two-step reaction: proline is first activated by ATP to form Pro-AMP and then transferred to the acceptor end of tRNA(Pro). As ProRS can inadvertently accommodate and process non-cognate amino acids such as alanine and cysteine, to avoid such errors it has two additional distinct editing activities against alanine. One activity is designated as 'pretransfer' editing and involves the tRNA(Pro)-independent hydrolysis of activated Ala-AMP. The other activity is designated 'posttransfer' editing and involves deacylation of mischarged Ala-tRNA(Pro). The misacylated Cys-tRNA(Pro) is not edited by ProRS. This is Proline--tRNA ligase from Escherichia coli O157:H7.